The following is a 706-amino-acid chain: Fatty acid oxidation complex subunit alpha (706 aa).

Residues 1–188 (MEKTFSLSRR…KMGLVDDVVP (188 aa)) form an enoyl-CoA hydratase region. Positions 308 to 706 (RKVAKAVVLG…AMAAEGKTFY (399 aa)) are 3-hydroxyacyl-CoA dehydrogenase.

This sequence in the N-terminal section; belongs to the enoyl-CoA hydratase/isomerase family. The protein in the central section; belongs to the 3-hydroxyacyl-CoA dehydrogenase family. In terms of assembly, heterotetramer of two alpha chains (FadJ) and two beta chains (FadI).

It is found in the cytoplasm. The catalysed reaction is a (3S)-3-hydroxyacyl-CoA = a (2E)-enoyl-CoA + H2O. The enzyme catalyses a 4-saturated-(3S)-3-hydroxyacyl-CoA = a (3E)-enoyl-CoA + H2O. It carries out the reaction a (3S)-3-hydroxyacyl-CoA + NAD(+) = a 3-oxoacyl-CoA + NADH + H(+). It catalyses the reaction (3S)-3-hydroxybutanoyl-CoA = (3R)-3-hydroxybutanoyl-CoA. It participates in lipid metabolism; fatty acid beta-oxidation. Its function is as follows. Catalyzes the formation of a hydroxyacyl-CoA by addition of water on enoyl-CoA. Also exhibits 3-hydroxyacyl-CoA epimerase and 3-hydroxyacyl-CoA dehydrogenase activities. The protein is Fatty acid oxidation complex subunit alpha of Shewanella amazonensis (strain ATCC BAA-1098 / SB2B).